We begin with the raw amino-acid sequence, 378 residues long: Endopolygalacturonase I (378 aa).

Positions 1-20 (MHLNTTLLVSLALGAASVLA) are cleaved as a signal peptide. Positions 21–39 (SPAPPAITAPPTAEEIAKR) are excised as a propeptide. A disulfide bond links C43 and C61. The O-linked (Man...) threonine glycan is linked to T44. S46, S48, S52, S53, S55, S57, and S62 each carry an O-linked (Man...) serine glycan. A glycan (O-linked (Man...) threonine) is linked at T63. S73 carries an O-linked (Man...) serine glycan. PbH1 repeat units lie at residues 174 to 204 (SDYL…DIGT), 205 to 226 (STYV…AVNS), 227 to 247 (GENI…SIGS), 256 to 277 (VKNV…RIKT), and 285 to 307 (VSDV…VVQQ). D219 functions as the Proton donor in the catalytic mechanism. C221 and C237 are oxidised to a cystine. H241 is a catalytic residue. N258 carries an N-linked (GlcNAc...) asparagine glycan. Intrachain disulfides connect C345/C350 and C369/C378.

This sequence belongs to the glycosyl hydrolase 28 family.

It is found in the secreted. The catalysed reaction is (1,4-alpha-D-galacturonosyl)n+m + H2O = (1,4-alpha-D-galacturonosyl)n + (1,4-alpha-D-galacturonosyl)m.. Its function is as follows. Involved in maceration and soft-rotting of plant tissue. Hydrolyzes the 1,4-alpha glycosidic bonds of de-esterified pectate in the smooth region of the plant cell wall. The sequence is that of Endopolygalacturonase I (pgaI) from Aspergillus aculeatus.